An 876-amino-acid polypeptide reads, in one-letter code: Bifunctional uridylyltransferase/uridylyl-removing enzyme (876 aa).

The tract at residues 1–332 (MPYQSPITFQ…NNGEEAEAVI (332 aa)) is uridylyltransferase. The tract at residues 333–692 (IDDDFQRRGN…LSKKATRGGT (360 aa)) is uridylyl-removing. One can recognise an HD domain in the interval 451-573 (VDEHSIRLLK…VRDEERLEYL (123 aa)). ACT domains lie at 693–777 (EVFI…RIPR) and 800–876 (LMEF…PSAQ).

It belongs to the GlnD family. Mg(2+) serves as cofactor.

The enzyme catalyses [protein-PII]-L-tyrosine + UTP = [protein-PII]-uridylyl-L-tyrosine + diphosphate. It catalyses the reaction [protein-PII]-uridylyl-L-tyrosine + H2O = [protein-PII]-L-tyrosine + UMP + H(+). Uridylyltransferase (UTase) activity is inhibited by glutamine, while glutamine activates uridylyl-removing (UR) activity. In terms of biological role, modifies, by uridylylation and deuridylylation, the PII regulatory proteins (GlnB and homologs), in response to the nitrogen status of the cell that GlnD senses through the glutamine level. Under low glutamine levels, catalyzes the conversion of the PII proteins and UTP to PII-UMP and PPi, while under higher glutamine levels, GlnD hydrolyzes PII-UMP to PII and UMP (deuridylylation). Thus, controls uridylylation state and activity of the PII proteins, and plays an important role in the regulation of nitrogen assimilation and metabolism. In Vibrio cholerae serotype O1 (strain ATCC 39315 / El Tor Inaba N16961), this protein is Bifunctional uridylyltransferase/uridylyl-removing enzyme.